Here is a 119-residue protein sequence, read N- to C-terminus: MARVKRGVTAHAKHKKVYKLAKGFRGRRKNTIRTAKAAVDKAGQYAFRDRKRKKRTFRALWIQRINAAVRPLGMTYSVFINGLAKSGVMVDRKVLSDLAITEPAAFLAIAEKAKAALAA.

Belongs to the bacterial ribosomal protein bL20 family.

In terms of biological role, binds directly to 23S ribosomal RNA and is necessary for the in vitro assembly process of the 50S ribosomal subunit. It is not involved in the protein synthesizing functions of that subunit. The sequence is that of Large ribosomal subunit protein bL20 from Rhodopseudomonas palustris (strain BisB18).